The sequence spans 144 residues: Putative pre-16S rRNA nuclease (144 aa).

This sequence belongs to the YqgF nuclease family.

The protein localises to the cytoplasm. In terms of biological role, could be a nuclease involved in processing of the 5'-end of pre-16S rRNA. In Oenococcus oeni (strain ATCC BAA-331 / PSU-1), this protein is Putative pre-16S rRNA nuclease.